Reading from the N-terminus, the 368-residue chain is Agmatine deiminase (368 aa).

The active-site Amidino-cysteine intermediate is Cys357.

The protein belongs to the agmatine deiminase family. Homodimer.

The enzyme catalyses agmatine + H2O = N-carbamoylputrescine + NH4(+). It functions in the pathway amine and polyamine biosynthesis; putrescine biosynthesis via agmatine pathway; N-carbamoylputrescine from agmatine: step 1/1. Its function is as follows. Mediates the hydrolysis of agmatine into N-carbamoylputrescine in the arginine decarboxylase (ADC) pathway of putrescine biosynthesis, a basic polyamine. This Pseudomonas putida (strain ATCC 47054 / DSM 6125 / CFBP 8728 / NCIMB 11950 / KT2440) protein is Agmatine deiminase.